The chain runs to 266 residues: MPKGKKAKGKKVAPAPAVVKKQEAKKVVNPLFEKRPKNFGIGQDIQPKRDLTRFVKWPRYIRLQRQRSILYKRLKVPPAINQFSQALDRQTATQLLKLAHKYRPETKQEKKQRLLARAEQKAAGKGDTPTKRPPVLRAGVNTVTTLVENKKAQLVVIAHDVDPIELVVFLPALCRKMGVPYCIIKSKARLGRLVHRKTCTCVAFTQVNPEDKGALAKLVEAVKTNYNDRYDEIRRHWGGNVLGPKSVARIAKLEKAKAKELATKLG.

Basic and acidic residues predominate over residues 104–130 (PETKQEKKQRLLARAEQKAAGKGDTPT). Positions 104-135 (PETKQEKKQRLLARAEQKAAGKGDTPTKRPPV) are disordered.

Belongs to the eukaryotic ribosomal protein eL8 family. In terms of assembly, component of the large ribosomal subunit.

Its subcellular location is the cytoplasm. Its function is as follows. Component of the large ribosomal subunit. The ribosome is a large ribonucleoprotein complex responsible for the synthesis of proteins in the cell. The protein is Large ribosomal subunit protein eL8 (RPL7A) of Gallus gallus (Chicken).